Consider the following 437-residue polypeptide: Purple acid phosphatase 18 (437 aa).

An N-terminal signal peptide occupies residues Met1–Ala23. Residues Asp148, Asp175, and Tyr178 each contribute to the Fe cation site. Asp175 contributes to the Zn(2+) binding site. Asn208 and His291 together coordinate Zn(2+). Asn208 is a substrate binding site. Residue His301 is the Proton donor of the active site. His328 is a binding site for Zn(2+). A substrate-binding site is contributed by His328–His330. A Fe cation-binding site is contributed by His330. A glycan (N-linked (GlcNAc...) asparagine) is linked at Asn390.

It belongs to the metallophosphoesterase superfamily. Purple acid phosphatase family. In terms of assembly, homodimer. Fe cation serves as cofactor. Zn(2+) is required as a cofactor. As to expression, expressed in roots, stems, leaves, flowers and siliques.

It localises to the secreted. It carries out the reaction a phosphate monoester + H2O = an alcohol + phosphate. In Arabidopsis thaliana (Mouse-ear cress), this protein is Purple acid phosphatase 18 (PAP18).